We begin with the raw amino-acid sequence, 364 residues long: Fructose-1,6-bisphosphatase class 1 2 (364 aa).

Residues E99, D121, L123, and D124 each contribute to the Mg(2+) site. Substrate-binding positions include 124-127 (DGSS) and N220. E292 is a Mg(2+) binding site.

This sequence belongs to the FBPase class 1 family. As to quaternary structure, homotetramer. The cofactor is Mg(2+).

It is found in the cytoplasm. The catalysed reaction is beta-D-fructose 1,6-bisphosphate + H2O = beta-D-fructose 6-phosphate + phosphate. Its pathway is carbohydrate biosynthesis; gluconeogenesis. The chain is Fructose-1,6-bisphosphatase class 1 2 from Polaromonas naphthalenivorans (strain CJ2).